Here is a 184-residue protein sequence, read N- to C-terminus: GTP cyclohydrolase 1 (184 aa).

The Zn(2+) site is built by Cys75, His78, and Cys146.

This sequence belongs to the GTP cyclohydrolase I family. Toroid-shaped homodecamer, composed of two pentamers of five dimers.

It catalyses the reaction GTP + H2O = 7,8-dihydroneopterin 3'-triphosphate + formate + H(+). It participates in cofactor biosynthesis; 7,8-dihydroneopterin triphosphate biosynthesis; 7,8-dihydroneopterin triphosphate from GTP: step 1/1. This chain is GTP cyclohydrolase 1, found in Streptococcus sanguinis (strain SK36).